We begin with the raw amino-acid sequence, 521 residues long: MSLLPDRERAPDGDISPQEMVPSRKNVVLVDGVILNGPATDVKAGEKFVEDACRLIMEEVVLKATDINEKVCEWRPPEELKRLLDLELRDAGEPHHRLLQRCQDVIRYSVKTNHPRFFNQLYAGLDYYSLVARFMTEALNPSVYTYEVSPVFLLVEEAVLKKMIEFIGWKEGDGIFNPGGSVSNMYAMNLARYKYCPDIKEKGLSGLPRLILFTSAECHYSMKKSASFLGIGTENVCFVETDGRGKMIPEELEKRVQEAKKEGAAPFLVCATSGTTVLGAFDPLDEIADICERHGLWLHVDASWGGSALMSRKHRRLLQGIHRADSVAWNPHKMLMAGIQCCAFLVKDKSDLLKRCYSANASYLFQQDKFYDVSYDTGDKSIQCSRRPDAFKFWLAWKALGTLGLEERVNRALALSRYLVEEIKKREGFKLLMEPEYANICFWYIPPSLRQMEEGPEFWAKLHLVAPAIKERMMKKGSLMLGYQPHQGKVNFFRQVVISPQVSREDMDFLLDEIDLLGKDM.

Residues 1–12 (MSLLPDRERAPD) show a composition bias toward basic and acidic residues. The segment at 1-20 (MSLLPDRERAPDGDISPQEM) is disordered. Lysine 333 bears the N6-(pyridoxal phosphate)lysine mark.

This sequence belongs to the group II decarboxylase family. In terms of assembly, homodimer. Requires pyridoxal 5'-phosphate as cofactor. As to expression, expressed at highest levels in skeletal muscles. Also detected heart, spleen and rumen.

The catalysed reaction is L-aspartate + H(+) = beta-alanine + CO2. The enzyme catalyses 3-sulfino-L-alanine + H(+) = hypotaurine + CO2. It catalyses the reaction L-cysteate + H(+) = taurine + CO2. Its function is as follows. Catalyzes the decarboxylation of L-aspartate, 3-sulfino-L-alanine (cysteine sulfinic acid), and L-cysteate to beta-alanine, hypotaurine and taurine, respectively. The preferred substrate is L-aspartate. Does not exhibit any decarboxylation activity toward glutamate. This Bos taurus (Bovine) protein is Acidic amino acid decarboxylase GADL1 (GADL1).